The sequence spans 377 residues: 2-aminoethylphosphonate--pyruvate transaminase (377 aa).

N6-(pyridoxal phosphate)lysine is present on Lys-194.

Belongs to the class-V pyridoxal-phosphate-dependent aminotransferase family. PhnW subfamily. In terms of assembly, homodimer. It depends on pyridoxal 5'-phosphate as a cofactor.

It carries out the reaction (2-aminoethyl)phosphonate + pyruvate = phosphonoacetaldehyde + L-alanine. Its function is as follows. Involved in phosphonate degradation. The sequence is that of 2-aminoethylphosphonate--pyruvate transaminase from Cupriavidus taiwanensis (strain DSM 17343 / BCRC 17206 / CCUG 44338 / CIP 107171 / LMG 19424 / R1) (Ralstonia taiwanensis (strain LMG 19424)).